The primary structure comprises 234 residues: Glucosamine-6-phosphate deaminase (234 aa).

The active-site Proton acceptor; for enolization step is the aspartate 63. Catalysis depends on asparagine 129, which acts as the For ring-opening step. The active-site Proton acceptor; for ring-opening step is the histidine 131. Residue glutamate 136 is the For ring-opening step of the active site.

The protein belongs to the glucosamine/galactosamine-6-phosphate isomerase family. NagB subfamily.

The catalysed reaction is alpha-D-glucosamine 6-phosphate + H2O = beta-D-fructose 6-phosphate + NH4(+). The protein operates within amino-sugar metabolism; N-acetylneuraminate degradation; D-fructose 6-phosphate from N-acetylneuraminate: step 5/5. Functionally, catalyzes the reversible isomerization-deamination of glucosamine 6-phosphate (GlcN6P) to form fructose 6-phosphate (Fru6P) and ammonium ion. This is Glucosamine-6-phosphate deaminase from Listeria innocua serovar 6a (strain ATCC BAA-680 / CLIP 11262).